The following is a 334-amino-acid chain: MERCSVAQQFEDRFHRKFYYLRLSVTDVCNFKCTYCLPDGYQPSGQKNSSFLNLSEIRRVVKAFADCGTSKVRITGGEPSLRKDFTDIIHTVASTQGIKRVATTTNGYRMEKHIGEWKEAGLNQINVSVDSLDPRMFHQITGENKFHQVMSGIDRAFEVGFEQVKVNVVLMKDLNHNELPAFLHWIKHRPIQLRFIELMQTGEMDTLFQQHHVSGVAIRNHLIANGWLLKVKAANDGPAQVFVHPDYQGEIGLIMPYEKDFCASCNRLRVSAKGKLHLCLFGDRGVELRDLLQQDDQESDLIARIQSELQTKSVSHFLNEGQTGMTPHLASIGG.

In terms of domain architecture, Radical SAM core spans 13–239; that stretch reads RFHRKFYYLR…KVKAANDGPA (227 aa). Arginine 22 is a GTP binding site. 2 residues coordinate [4Fe-4S] cluster: cysteine 29 and cysteine 33. Tyrosine 35 lines the S-adenosyl-L-methionine pocket. Cysteine 36 serves as a coordination point for [4Fe-4S] cluster. Arginine 73 provides a ligand contact to GTP. Glycine 77 lines the S-adenosyl-L-methionine pocket. Threonine 104 lines the GTP pocket. Serine 128 is an S-adenosyl-L-methionine binding site. Lysine 165 serves as a coordination point for GTP. Methionine 199 is an S-adenosyl-L-methionine binding site. 2 residues coordinate [4Fe-4S] cluster: cysteine 262 and cysteine 265. 267 to 269 serves as a coordination point for GTP; sequence RLR. Cysteine 279 provides a ligand contact to [4Fe-4S] cluster.

This sequence belongs to the radical SAM superfamily. MoaA family. In terms of assembly, monomer and homodimer. [4Fe-4S] cluster serves as cofactor.

The enzyme catalyses GTP + AH2 + S-adenosyl-L-methionine = (8S)-3',8-cyclo-7,8-dihydroguanosine 5'-triphosphate + 5'-deoxyadenosine + L-methionine + A + H(+). It functions in the pathway cofactor biosynthesis; molybdopterin biosynthesis. In terms of biological role, catalyzes the cyclization of GTP to (8S)-3',8-cyclo-7,8-dihydroguanosine 5'-triphosphate. This is GTP 3',8-cyclase from Vibrio vulnificus (strain CMCP6).